The following is a 403-amino-acid chain: Tyrosine--tRNA ligase (403 aa).

A 'HIGH' region motif is present at residues 43–52 (PTAPDLHLGH). The 'KMSKS' region motif lies at 227 to 231 (KMSKS). ATP is bound at residue lysine 230. One can recognise an S4 RNA-binding domain in the interval 338 to 399 (LPIAQLLKQT…GKRKFARVTI (62 aa)).

The protein belongs to the class-I aminoacyl-tRNA synthetase family. TyrS type 2 subfamily. Homodimer.

The protein resides in the cytoplasm. It carries out the reaction tRNA(Tyr) + L-tyrosine + ATP = L-tyrosyl-tRNA(Tyr) + AMP + diphosphate + H(+). Its function is as follows. Catalyzes the attachment of tyrosine to tRNA(Tyr) in a two-step reaction: tyrosine is first activated by ATP to form Tyr-AMP and then transferred to the acceptor end of tRNA(Tyr). This Nitrosospira multiformis (strain ATCC 25196 / NCIMB 11849 / C 71) protein is Tyrosine--tRNA ligase.